The chain runs to 265 residues: Type 1 encapsulin shell protein (265 aa).

The protein belongs to the encapsulin family. Family 1 subfamily. Found in a complex with DyP, suggesting it is the native cargo protein. Monomers form pentamers, which assemble to form hollow shells composed of 60 subunits with several openings.

It is found in the encapsulin nanocompartment. It localises to the cell membrane. Functionally, shell component of a type 1 encapsulin nanocompartment. Assembles into proteinaceous shells 23-24 nm in diameter with 2-2.5 nm thick walls. Cargo protein DyP is targeted to the interior via its C-terminal extension; probably only 1 DyP hexamer is incorporated into each shell. Probably involved in protection against oxidative damage. This Mycolicibacterium paratuberculosis (strain ATCC BAA-968 / K-10) (Mycobacterium paratuberculosis) protein is Type 1 encapsulin shell protein.